A 291-amino-acid polypeptide reads, in one-letter code: Elongation factor Ts (291 aa).

Residues 79–82 (TDFV) are involved in Mg(2+) ion dislocation from EF-Tu.

It belongs to the EF-Ts family.

Its subcellular location is the cytoplasm. Functionally, associates with the EF-Tu.GDP complex and induces the exchange of GDP to GTP. It remains bound to the aminoacyl-tRNA.EF-Tu.GTP complex up to the GTP hydrolysis stage on the ribosome. The protein is Elongation factor Ts of Anaplasma marginale (strain St. Maries).